An 802-amino-acid polypeptide reads, in one-letter code: Ribosomal protein S6 kinase alpha-5 (802 aa).

Residues 1 to 22 (MEEEGGSSGGAAGTSADGGDGG) are compositionally biased toward gly residues. A disordered region spans residues 1–23 (MEEEGGSSGGAAGTSADGGDGGE). The 270-residue stretch at 49 to 318 (FELLKVLGTG…ADEIKEHLFF (270 aa)) folds into the Protein kinase 1 domain. ATP is bound by residues 55–63 (LGTGAYGKV) and K81. The active-site Proton acceptor is the D177. A Phosphoserine; by autocatalysis modification is found at S212. The region spanning 319-387 (QKINWDDLAA…VAPSILFKRN (69 aa)) is the AGC-kinase C-terminal domain. The residue at position 360 (S360) is a Phosphoserine; by MAPK1, MAPK3 and MAPK14. Phosphoserine; by autocatalysis occurs at positions 376 and 381. One can recognise a Protein kinase 2 domain in the interval 426-687 (DLKDKPLGEG…MSGLRYNEWL (262 aa)). Residues 432-440 (LGEGSFSIC) and K455 each bind ATP. The Proton acceptor role is filled by D544. Position 581 is a phosphothreonine; by MAPK1, MAPK3 and MAPK14 (T581). Phosphoserine occurs at positions 647, 657, 691, and 695. At T700 the chain carries Phosphothreonine; by MAPK1, MAPK3 and MAPK14. Positions 741–802 (AKRRKMKKTS…TLFQFSDSVA (62 aa)) are disordered. A compositionally biased stretch (low complexity) spans 749–779 (TSTSTETRSSSSESSHSSSSHSHGKTTPTKT). Phosphoserine; by autocatalysis is present on residues S750, S752, and S758. The span at 780–802 (LQPSNPADSNNPETLFQFSDSVA) shows a compositional bias: polar residues. Residue S798 is modified to Phosphoserine.

The protein belongs to the protein kinase superfamily. AGC Ser/Thr protein kinase family. S6 kinase subfamily. Forms a complex with either MAPK1/ERK2 or MAPK3/ERK1 in quiescent cells which transiently dissociates following mitogenic stimulation. Also associates with MAPK14/p38-alpha. Activated RPS6KA5 associates with and phosphorylates the NF-kappa-B p65 subunit RELA. Interacts with CREBBP and EP300. Mg(2+) serves as cofactor. Post-translationally, ser-376 and Thr-581 phosphorylation is required for kinase activity. Ser-376 and Ser-212 are autophosphorylated by the C-terminal kinase domain, and their phosphorylation is essential for the catalytic activity of the N-terminal kinase domain. Phosphorylated at Ser-360, Thr-581 and Thr-700 by MAPK1/ERK2, MAPK3/ERK1 and MAPK14/p38-alpha. Autophosphorylated at Ser-750, Ser-752 and Ser-758 by the N-terminal kinase domain. Ubiquitinated.

The protein localises to the nucleus. It carries out the reaction L-seryl-[protein] + ATP = O-phospho-L-seryl-[protein] + ADP + H(+). The catalysed reaction is L-threonyl-[protein] + ATP = O-phospho-L-threonyl-[protein] + ADP + H(+). Activated by phosphorylation at Ser-360, Thr-581 and Thr-700 by MAPK1/ERK2, MAPK3/ERK1 and MAPK14/p38-alpha, and by further autophosphorylation of Ser-212, Ser-376 and Ser-381 by the activated C-terminal kinase domain. The active N-terminal kinase domain finally phosphorylates downstream substrates, as well as Ser-750, Ser-752 and Ser-758 in its own C-terminal region. Functionally, serine/threonine-protein kinase that is required for the mitogen or stress-induced phosphorylation of the transcription factors CREB1 and ATF1 and for the regulation of the transcription factors RELA, STAT3 and ETV1/ER81, and that contributes to gene activation by histone phosphorylation and functions in the regulation of inflammatory genes. Phosphorylates CREB1 and ATF1 in response to mitogenic or stress stimuli such as UV-C irradiation, epidermal growth factor (EGF) and anisomycin. Plays an essential role in the control of RELA transcriptional activity in response to TNF and upon glucocorticoid, associates in the cytoplasm with the glucocorticoid receptor NR3C1 and contributes to RELA inhibition and repression of inflammatory gene expression. In skeletal myoblasts is required for phosphorylation of RELA at 'Ser-276' during oxidative stress. In erythropoietin-stimulated cells, is necessary for the 'Ser-727' phosphorylation of STAT3 and regulation of its transcriptional potential. Phosphorylates ETV1/ER81 at 'Ser-191' and 'Ser-216', and thereby regulates its ability to stimulate transcription, which may be important during development and breast tumor formation. Directly represses transcription via phosphorylation of 'Ser-1' of histone H2A. Phosphorylates 'Ser-10' of histone H3 in response to mitogenics, stress stimuli and EGF, which results in the transcriptional activation of several immediate early genes, including proto-oncogenes c-fos/FOS and c-jun/JUN. May also phosphorylate 'Ser-28' of histone H3. Mediates the mitogen- and stress-induced phosphorylation of high mobility group protein 1 (HMGN1/HMG14). In lipopolysaccharide-stimulated primary macrophages, acts downstream of the Toll-like receptor TLR4 to limit the production of pro-inflammatory cytokines. Functions probably by inducing transcription of the MAP kinase phosphatase DUSP1 and the anti-inflammatory cytokine interleukin 10 (IL10), via CREB1 and ATF1 transcription factors. Plays a role in neuronal cell death by mediating the downstream effects of excitotoxic injury. Phosphorylates TRIM7 at 'Ser-107' in response to growth factor signaling via the MEK/ERK pathway, thereby stimulating its ubiquitin ligase activity. The sequence is that of Ribosomal protein S6 kinase alpha-5 (RPS6KA5) from Pongo abelii (Sumatran orangutan).